A 569-amino-acid polypeptide reads, in one-letter code: MLO-like protein 10 (569 aa).

Over 1-41 the chain is Extracellular; that stretch reads MATRCFWCWTTLLFCSQLLTGFARASSAGGAKEKGLSQTPT. Residues 42–62 form a helical membrane-spanning segment; that stretch reads WAVALVCTFFILVSVLLEKAL. Over 63-85 the chain is Cytoplasmic; sequence HRVATWLWEKHKNSLLEALEKIK. A helical transmembrane segment spans residues 86–106; it reads AELMILGFISLLLTFGEQYIL. Residues 107-163 lie on the Extracellular side of the membrane; that stretch reads KICIPEKAAASMLPCPAPSTHDQDKTHRRRLAAATTSSRCDEGHEPLIPATGLHQLH. The chain crosses the membrane as a helical span at residues 164–184; sequence ILLFFMAAFHILYSFITMMLG. The Cytoplasmic segment spans residues 185–286; sequence RLKIRGWKKW…IKRSLEDDFK (102 aa). Residues 287 to 307 form a helical membrane-spanning segment; it reads VVVGISPLLWASFVIFLLLNV. N308 is a topological domain (extracellular). A helical transmembrane segment spans residues 309–329; sequence GWEALFWASILPVLIILAVST. The Cytoplasmic portion of the chain corresponds to 330–372; sequence KLQAILTRMALGITERHAVVQGIPLVHGSDKYFWFNRPQLLLH. Residues 373–393 traverse the membrane as a helical segment; that stretch reads LLHFALFQNAFQLTYFFWVWY. At 394–413 the chain is on the extracellular side; the sequence is SFGLKSCFHTDFKLVIVKLS. Residues 414 to 434 form a helical membrane-spanning segment; the sequence is LGVGALILCSYITLPLYALVT. Residues 435–569 lie on the Cytoplasmic side of the membrane; the sequence is QMGSNMKKAV…VKNVPANDID (135 aa). A calmodulin-binding region spans residues 447 to 468; the sequence is EQMAKALKKWHMTVKKKKGKAR.

This sequence belongs to the MLO family.

It localises to the membrane. In terms of biological role, may be involved in modulation of pathogen defense and leaf cell death. Activity seems to be regulated by Ca(2+)-dependent calmodulin binding and seems not to require heterotrimeric G proteins. This chain is MLO-like protein 10 (MLO10), found in Arabidopsis thaliana (Mouse-ear cress).